A 445-amino-acid polypeptide reads, in one-letter code: Phosphoglucosamine mutase 1 (445 aa).

The active-site Phosphoserine intermediate is Ser-102. Mg(2+)-binding residues include Ser-102, Asp-241, Asp-243, and Asp-245. Ser-102 carries the post-translational modification Phosphoserine.

It belongs to the phosphohexose mutase family. The cofactor is Mg(2+). Activated by phosphorylation.

The catalysed reaction is alpha-D-glucosamine 1-phosphate = D-glucosamine 6-phosphate. Its function is as follows. Catalyzes the conversion of glucosamine-6-phosphate to glucosamine-1-phosphate. The sequence is that of Phosphoglucosamine mutase 1 from Shewanella sp. (strain MR-7).